The primary structure comprises 341 residues: GTPase Obg (341 aa).

An Obg domain is found at 2 to 160 (SGFIDEVPIQ…FSLILELKLL (159 aa)). Residues 161 to 330 (ADIGIVGLPN…LLERIDKVFF (170 aa)) form the OBG-type G domain. GTP contacts are provided by residues 167 to 174 (GLPNAGKS), 192 to 196 (FTTLS), 215 to 218 (DIPG), 282 to 285 (NKMD), and 311 to 313 (SAD). Residues Ser-174 and Thr-194 each contribute to the Mg(2+) site.

The protein belongs to the TRAFAC class OBG-HflX-like GTPase superfamily. OBG GTPase family. In terms of assembly, monomer. Mg(2+) serves as cofactor.

The protein localises to the cytoplasm. Functionally, an essential GTPase which binds GTP, GDP and possibly (p)ppGpp with moderate affinity, with high nucleotide exchange rates and a fairly low GTP hydrolysis rate. Plays a role in control of the cell cycle, stress response, ribosome biogenesis and in those bacteria that undergo differentiation, in morphogenesis control. The sequence is that of GTPase Obg from Leptospira biflexa serovar Patoc (strain Patoc 1 / Ames).